Reading from the N-terminus, the 216-residue chain is Ras-related protein Rab-11A (216 aa).

Position 2 is an N-acetylglycine (Gly2). GTP contacts are provided by Ser20, Gly21, Val22, Gly23, Lys24, Ser25, Asn26, Asn37, Leu38, Ser40, Ser42, and Thr43. A Mg(2+)-binding site is contributed by Ser25. The Switch 1 motif lies at 36–47 (FNLESKSTIGVE). Residues Thr43 and Asp66 each contribute to the Mg(2+) site. Residues 67–86 (TAGQERYRAITSAYYRGAVG) carry the Switch 2 motif. Positions 69, 124, 125, 127, 155, and 156 each coordinate GTP. A disordered region spans residues 183–207 (DRRENDMSPSNNVVPIHVPPTTENK). S-geranylgeranyl cysteine attachment occurs at residues Cys212 and Cys213. At Cys213 the chain carries Cysteine methyl ester. The propeptide at 214–216 (QNI) is removed in mature form.

This sequence belongs to the small GTPase superfamily. Rab family. Interacts (GTP-bound form) with RAB11FIPs (via their C-termini) including RAB11FIP1, RAB11FIP2, RAB11FIP3, RAB11FIP4 and RAB11FIP5 effectors. Forms a complex with RAB11FIP3 and dynein intermediate chain DYNC1LI1; the interaction between RAB11A1 and RAB11FIP3 is direct; the complex regulates endocytic trafficking. Interacts with EVI5; EVI5 and RAB11FIP3 may be mutually exclusive and compete for binding RAB11A. Interacts with SGSM1, SGSM2, SGSM3 and VIPAS39. Interacts with EXOC6 in a GTP-dependent manner. Interacts with RAB11FIP5. Interacts with STXBP6. Interacts (GDP-bound form) with ZFYVE27. Interacts with BIRC6/bruce. May interact with TBC1D14. Interacts with UNC119; in a cell cycle-dependent manner. GDP-bound and nucleotide-free forms interact with SH3BP5. Interacts (GDP-bound form) with KIF5A in a ZFYVE27-dependent manner. Interacts (GDP-bound form) with RELCH. Found in a complex composed of RELCH, OSBP1 and RAB11A. Interacts with TBC1D12. Interacts with DEF6. Interacts with ATP9A. Forms a heterotetramer with RAB11FIP3; the GTP-bound form is preferred for binding. Forms a complex with Rabin8/RAB3IP and RAB11FIP3, probably a heterohexamer with two of each protein subunit, where Rabin8/RAB3IP and RAB11FIP3 simultaneously bind to RAB11A; the complex promotes preciliary trafficking and cilia growth. Forms a complex containing RAB11A, ASAP1, Rabin8/RAB3IP, RAP11FIP3 and ARF4; the complex promotes preciliary trafficking; the complex binds to RHO in photoreceptor cells and promotes RHO ciliary transport. Interacts (GTP-bound form) with WDR44; the interaction prevents RAB11A-RAB3IP-RAB11FIP3 complex formation. Mg(2+) is required as a cofactor.

The protein resides in the cell membrane. The protein localises to the endosome membrane. It is found in the recycling endosome membrane. It localises to the cleavage furrow. Its subcellular location is the cytoplasmic vesicle. The protein resides in the phagosome. The protein localises to the cytoplasmic vesicle membrane. It is found in the golgi apparatus. It localises to the trans-Golgi network. It catalyses the reaction GTP + H2O = GDP + phosphate + H(+). With respect to regulation, regulated by guanine nucleotide exchange factors (GEFs) which promote the exchange of bound GDP for free GTP. Regulated by GTPase activating proteins (GAPs) which increase the GTP hydrolysis activity. Inhibited by GDP dissociation inhibitors (GDIs) which prevent Rab-GDP dissociation. Its function is as follows. The small GTPases Rab are key regulators of intracellular membrane trafficking, from the formation of transport vesicles to their fusion with membranes. Rabs cycle between an inactive GDP-bound form and an active GTP-bound form that is able to recruit to membranes different set of downstream effectors directly responsible for vesicle formation, movement, tethering and fusion. The small Rab GTPase RAB11A regulates endocytic recycling. Forms a functional Rab11/RAB11FIP3/dynein complex that regulates the movement of peripheral sorting endosomes (SE) along microtubule tracks toward the microtubule organizing center/centrosome, generating the endosomal recycling compartment (ERC). Acts as a major regulator of membrane delivery during cytokinesis. Together with MYO5B and RAB8A participates in epithelial cell polarization. Together with Rabin8/RAB3IP, RAB8A, the exocyst complex, PARD3, PRKCI, ANXA2, CDC42 and DNMBP promotes transcytosis of PODXL to the apical membrane initiation sites (AMIS), apical surface formation and lumenogenesis. Together with MYO5B participates in CFTR trafficking to the plasma membrane and TF (Transferrin) recycling in nonpolarized cells. Required in a complex with MYO5B and RAB11FIP2 for the transport of NPC1L1 to the plasma membrane. Participates in the sorting and basolateral transport of CDH1 from the Golgi apparatus to the plasma membrane. Regulates the recycling of FCGRT (receptor of Fc region of monomeric IgG) to basolateral membranes. May also play a role in melanosome transport and release from melanocytes. Promotes Rabin8/RAB3IP preciliary vesicular trafficking to mother centriole by forming a ciliary targeting complex containing Rab11, ASAP1, Rabin8/RAB3IP, RAB11FIP3 and ARF4, thereby regulating ciliogenesis initiation. On the contrary, upon LPAR1 receptor signaling pathway activation, interaction with phosphorylated WDR44 prevents Rab11-RAB3IP-RAB11FIP3 complex formation and cilia growth. Participates in the export of a subset of neosynthesized proteins through a Rab8-Rab10-Rab11-endososomal dependent export route via interaction with WDR44. In Bos taurus (Bovine), this protein is Ras-related protein Rab-11A.